We begin with the raw amino-acid sequence, 363 residues long: Inositol-3-phosphate synthase (363 aa).

Residue Lys65 forms an Isoglutamyl lysine isopeptide (Lys-Gln) (interchain with Q-Cter in protein Pup) linkage. Asp70, Ala129, Tyr149, Ser192, Asp227, and Lys240 together coordinate NAD(+).

This sequence belongs to the myo-inositol 1-phosphate synthase family. The cofactor is NAD(+). In terms of processing, pupylated at Lys-65 by the prokaryotic ubiquitin-like protein Pup, which leads to its degradation by the proteasome.

It carries out the reaction D-glucose 6-phosphate = 1D-myo-inositol 3-phosphate. Its function is as follows. Key enzyme in myo-inositol biosynthesis pathway that catalyzes the conversion of glucose 6-phosphate to 1D-myo-inositol 3-phosphate in a NAD-dependent manner. This Mycolicibacterium smegmatis (strain ATCC 700084 / mc(2)155) (Mycobacterium smegmatis) protein is Inositol-3-phosphate synthase (ino1).